Reading from the N-terminus, the 271-residue chain is 3-methyl-2-oxobutanoate hydroxymethyltransferase (271 aa).

Positions 52 and 91 each coordinate Mg(2+). 3-methyl-2-oxobutanoate-binding positions include 52–53 (DS), Asp-91, and Lys-121. Position 123 (Glu-123) interacts with Mg(2+). Glu-189 (proton acceptor) is an active-site residue.

The protein belongs to the PanB family. As to quaternary structure, homodecamer; pentamer of dimers. Requires Mg(2+) as cofactor.

It localises to the cytoplasm. It carries out the reaction 3-methyl-2-oxobutanoate + (6R)-5,10-methylene-5,6,7,8-tetrahydrofolate + H2O = 2-dehydropantoate + (6S)-5,6,7,8-tetrahydrofolate. Its pathway is cofactor biosynthesis; (R)-pantothenate biosynthesis; (R)-pantoate from 3-methyl-2-oxobutanoate: step 1/2. Catalyzes the reversible reaction in which hydroxymethyl group from 5,10-methylenetetrahydrofolate is transferred onto alpha-ketoisovalerate to form ketopantoate. The protein is 3-methyl-2-oxobutanoate hydroxymethyltransferase of Acidothermus cellulolyticus (strain ATCC 43068 / DSM 8971 / 11B).